We begin with the raw amino-acid sequence, 158 residues long: uncharacterized protein (158 aa).

Residues 77 to 132 form a disordered region; that stretch reads AIKRNKIGGSKRSEVHSNRSKNYSSKKFRSQKCRRSRQKKRQNKKPNNSRFISSNK. Over residues 100–120 the composition is skewed to basic residues; it reads SSKKFRSQKCRRSRQKKRQNK.

This is an uncharacterized protein from Acanthamoeba polyphaga mimivirus (APMV).